A 53-amino-acid chain; its full sequence is Photosystem II reaction center protein K (53 aa).

Positions 1-16 are excised as a propeptide; the sequence is MFYTNVETLLNTNCFA. A helical transmembrane segment spans residues 28–48; the sequence is LVDVLPIIPLLFLLLAFVWQA.

Belongs to the PsbK family. PSII is composed of 1 copy each of membrane proteins PsbA, PsbB, PsbC, PsbD, PsbE, PsbF, PsbH, PsbI, PsbJ, PsbK, PsbL, PsbM, PsbT, PsbY, PsbZ, Psb30/Ycf12, at least 3 peripheral proteins of the oxygen-evolving complex and a large number of cofactors. It forms dimeric complexes.

The protein resides in the plastid. It localises to the chloroplast thylakoid membrane. Functionally, one of the components of the core complex of photosystem II (PSII). PSII is a light-driven water:plastoquinone oxidoreductase that uses light energy to abstract electrons from H(2)O, generating O(2) and a proton gradient subsequently used for ATP formation. It consists of a core antenna complex that captures photons, and an electron transfer chain that converts photonic excitation into a charge separation. The chain is Photosystem II reaction center protein K from Euglena anabaena (Euglenaria anabaena).